We begin with the raw amino-acid sequence, 282 residues long: 4-deoxy-L-threo-5-hexosulose-uronate ketol-isomerase 2 (282 aa).

Zn(2+) contacts are provided by H200, H202, E207, and H249.

The protein belongs to the KduI family. Requires Zn(2+) as cofactor.

The enzyme catalyses 5-dehydro-4-deoxy-D-glucuronate = 3-deoxy-D-glycero-2,5-hexodiulosonate. The protein operates within glycan metabolism; pectin degradation; 2-dehydro-3-deoxy-D-gluconate from pectin: step 4/5. Its function is as follows. Catalyzes the isomerization of 5-dehydro-4-deoxy-D-glucuronate to 3-deoxy-D-glycero-2,5-hexodiulosonate. The sequence is that of 4-deoxy-L-threo-5-hexosulose-uronate ketol-isomerase 2 (kduI2) from Rhizobium meliloti (strain 1021) (Ensifer meliloti).